A 264-amino-acid chain; its full sequence is Thymidylate synthase (264 aa).

DUMP contacts are provided by residues Arg21 and 126-127 (RR). Cys146 functions as the Nucleophile in the catalytic mechanism. DUMP-binding positions include 166–169 (RSAD), Asn177, and 207–209 (HLY). Asp169 contributes to the (6R)-5,10-methylene-5,6,7,8-tetrahydrofolate binding site. (6R)-5,10-methylene-5,6,7,8-tetrahydrofolate is bound at residue Ala263.

It belongs to the thymidylate synthase family. Bacterial-type ThyA subfamily. As to quaternary structure, homodimer.

It is found in the cytoplasm. It carries out the reaction dUMP + (6R)-5,10-methylene-5,6,7,8-tetrahydrofolate = 7,8-dihydrofolate + dTMP. It functions in the pathway pyrimidine metabolism; dTTP biosynthesis. Its function is as follows. Catalyzes the reductive methylation of 2'-deoxyuridine-5'-monophosphate (dUMP) to 2'-deoxythymidine-5'-monophosphate (dTMP) while utilizing 5,10-methylenetetrahydrofolate (mTHF) as the methyl donor and reductant in the reaction, yielding dihydrofolate (DHF) as a by-product. This enzymatic reaction provides an intracellular de novo source of dTMP, an essential precursor for DNA biosynthesis. In Rhodopseudomonas palustris (strain BisB5), this protein is Thymidylate synthase.